The following is a 66-amino-acid chain: uncharacterized protein (66 aa).

2 consecutive transmembrane segments (helical) span residues 6–26 (KIIM…HFVG) and 39–59 (VTFF…SILL).

It is found in the cell membrane. This is an uncharacterized protein from Bacillus subtilis (strain 168).